The sequence spans 177 residues: Large ribosomal subunit protein uL6 (177 aa).

The segment covering 152–171 (RPPEPYKGKGVRYDDEEVRR) has biased composition (basic and acidic residues). Positions 152–177 (RPPEPYKGKGVRYDDEEVRRKEAKKK) are disordered.

Belongs to the universal ribosomal protein uL6 family. As to quaternary structure, part of the 50S ribosomal subunit.

This protein binds to the 23S rRNA, and is important in its secondary structure. It is located near the subunit interface in the base of the L7/L12 stalk, and near the tRNA binding site of the peptidyltransferase center. The chain is Large ribosomal subunit protein uL6 from Shewanella sp. (strain ANA-3).